Reading from the N-terminus, the 190-residue chain is Peptidyl-tRNA hydrolase (190 aa).

Residue Y18 participates in tRNA binding. H23 (proton acceptor) is an active-site residue. TRNA contacts are provided by F67, N69, and N115.

Belongs to the PTH family. In terms of assembly, monomer.

It localises to the cytoplasm. It carries out the reaction an N-acyl-L-alpha-aminoacyl-tRNA + H2O = an N-acyl-L-amino acid + a tRNA + H(+). In terms of biological role, hydrolyzes ribosome-free peptidyl-tRNAs (with 1 or more amino acids incorporated), which drop off the ribosome during protein synthesis, or as a result of ribosome stalling. Its function is as follows. Catalyzes the release of premature peptidyl moieties from peptidyl-tRNA molecules trapped in stalled 50S ribosomal subunits, and thus maintains levels of free tRNAs and 50S ribosomes. This is Peptidyl-tRNA hydrolase from Leptospira interrogans serogroup Icterohaemorrhagiae serovar Lai (strain 56601).